A 343-amino-acid chain; its full sequence is Acetylglutamate kinase (343 aa).

Residues 98 to 99 (GG), Arg-120, and Asn-219 contribute to the substrate site.

This sequence belongs to the acetylglutamate kinase family. ArgB subfamily.

It localises to the cytoplasm. It catalyses the reaction N-acetyl-L-glutamate + ATP = N-acetyl-L-glutamyl 5-phosphate + ADP. The protein operates within amino-acid biosynthesis; L-arginine biosynthesis; N(2)-acetyl-L-ornithine from L-glutamate: step 2/4. Its function is as follows. Catalyzes the ATP-dependent phosphorylation of N-acetyl-L-glutamate. The chain is Acetylglutamate kinase from Frankia alni (strain DSM 45986 / CECT 9034 / ACN14a).